The primary structure comprises 482 residues: Tektin (482 aa).

Coiled coils occupy residues 100–129 (CLAEVISEIAELLSTKKRLEERNGKVQAKI), 171–204 (ARAVAQVDREVAQLEAVRAKLEADLRDKTEALRV), 282–324 (RLNE…ALTS), 376–407 (VKVAAVDREIAALDATAAQLESNIADKDDALR), and 441–478 (RTQTLARIRELEASLTSARREREAMESSIRQLRDTMGG). The disordered stretch occupies residues 311–330 (EQARAKGQRSALTSALDDKR). An Asymmetric dimethylarginine modification is found at Arg462.

The protein belongs to the tektin family. In terms of processing, asymmetrically dimethylated at Arg-462 during flagellum resorption. Probably methylated by PRMT1.

The protein resides in the cytoplasm. Its subcellular location is the cytoskeleton. It localises to the flagellum axoneme. The protein localises to the flagellum basal body. Its function is as follows. Structural component of ciliary and flagellar microtubules. Plays a key role in the assembly or attachment of the inner dynein arm to microtubules in flagella and cilia. Forms filamentous polymers in the walls of ciliary and flagellar microtubules. The chain is Tektin from Chlamydomonas reinhardtii (Chlamydomonas smithii).